The sequence spans 546 residues: Chaperonin GroEL (546 aa).

ATP is bound by residues 29-32, Lys-50, 86-90, Gly-414, and Asp-492; these read TMGP and DGTTT.

It belongs to the chaperonin (HSP60) family. As to quaternary structure, forms a cylinder of 14 subunits composed of two heptameric rings stacked back-to-back. Interacts with the co-chaperonin GroES.

The protein localises to the cytoplasm. It carries out the reaction ATP + H2O + a folded polypeptide = ADP + phosphate + an unfolded polypeptide.. Together with its co-chaperonin GroES, plays an essential role in assisting protein folding. The GroEL-GroES system forms a nano-cage that allows encapsulation of the non-native substrate proteins and provides a physical environment optimized to promote and accelerate protein folding. The chain is Chaperonin GroEL from Helicobacter acinonychis (strain Sheeba).